Reading from the N-terminus, the 344-residue chain is Phenylalanine--tRNA ligase alpha subunit (344 aa).

A Mg(2+)-binding site is contributed by E255.

Belongs to the class-II aminoacyl-tRNA synthetase family. Phe-tRNA synthetase alpha subunit type 1 subfamily. In terms of assembly, tetramer of two alpha and two beta subunits. The cofactor is Mg(2+).

It is found in the cytoplasm. It carries out the reaction tRNA(Phe) + L-phenylalanine + ATP = L-phenylalanyl-tRNA(Phe) + AMP + diphosphate + H(+). In Sulfurihydrogenibium sp. (strain YO3AOP1), this protein is Phenylalanine--tRNA ligase alpha subunit.